The chain runs to 348 residues: uncharacterized protein (348 aa).

The signal sequence occupies residues 1–26; it reads MKKRIILLLAVIIAAAAAGVAFYVAK.

This is an uncharacterized protein from Bacillus subtilis (strain 168).